The chain runs to 84 residues: MANIVSNEKTYRHTQKVRKENHAKMSKLRTIVKKTRSSNEQAQLNEAYKVIDTTASKGVIHKNKANRLKSRTAKAFKTNLEVTA.

The interval 1–25 (MANIVSNEKTYRHTQKVRKENHAKM) is disordered.

This sequence belongs to the bacterial ribosomal protein bS20 family.

Its function is as follows. Binds directly to 16S ribosomal RNA. This Ureaplasma parvum serovar 3 (strain ATCC 700970) protein is Small ribosomal subunit protein bS20.